Here is a 156-residue protein sequence, read N- to C-terminus: Ecotin (156 aa).

The signal sequence occupies residues 1-19 (MKALLIAAGVAALSSTAMA). Cys-65 and Cys-102 are disulfide-bonded.

It belongs to the protease inhibitor I11 (ecotin) family. In terms of assembly, homodimer.

The protein resides in the periplasm. General inhibitor of family S1 serine proteases. This Pseudomonas aeruginosa (strain LESB58) protein is Ecotin.